A 343-amino-acid chain; its full sequence is Major capsid protein VP1 (343 aa).

It belongs to the polyomaviruses coat protein VP1 family. As to quaternary structure, homomultimer; disulfide-linked. The virus capsid is composed of 72 icosahedral units, each one composed of five disulfide-linked copies of VP1. Interacts with minor capsid proteins VP2 and VP3.

It is found in the virion. The protein localises to the host nucleus. Functionally, forms an icosahedral capsid with a T=7 symmetry and a 46-48 nm diameter. The capsid is composed of 72 pentamers linked to each other by disulfide bonds and associated with VP2 or VP3 proteins. Interacts with sialic acids on the cell surface to provide virion attachment to target cell. Once attached, the virion is internalized by endocytosis and traffics to the endoplasmic reticulum. Inside the endoplasmic reticulum, the protein folding machinery isomerizes VP1 interpentamer disulfide bonds, thereby triggering initial uncoating. Next, the virion uses the endoplasmic reticulum-associated degradation machinery to probably translocate in the cytosol before reaching the nucleus. Nuclear entry of the viral DNA involves the selective exposure and importin recognition of VP2/Vp3 nuclear localization signal. In late phase of infection, neo-synthesized VP1 encapsulates replicated genomic DNA in the nucleus, and participates in rearranging nucleosomes around the viral DNA. This is Major capsid protein VP1 from Psittacidae (parrots).